The chain runs to 1456 residues: Sterol 3-beta-glucosyltransferase (1456 aa).

Over residues 60–70 (ESDEEDGDEVE) the composition is skewed to acidic residues. 2 disordered regions span residues 60 to 113 (ESDE…SISH) and 128 to 156 (LSPHSLCHTSSHEASRRGSAEQPSRTQSE). The segment covering 71 to 104 (TPSTTTTAVSPSATMSAPSPTATAPTPHSGTHTP) has biased composition (low complexity). Residues 137–146 (SSHEASRRGS) show a composition bias toward basic and acidic residues. The region spanning 200–247 (QKLKGFAALDVDEQLIADYPVWLLKNVLIQGHLYITAKHMCFLSYLPR) is the GRAM 1 domain. A PH domain is found at 251–351 (ANIRSGTLVK…WVKALQKEIF (101 aa)). 2 disordered regions span residues 462-512 (HSAH…PRLP) and 524-776 (DKCD…QDTF). The segment covering 496–508 (QPHERDEKRDSKL) has biased composition (basic and acidic residues). A compositionally biased stretch (polar residues) spans 556–567 (LASQRTSSSTLF). Low complexity-rich tracts occupy residues 576–606 (SQPTTPGVHAPGSSTPGGSYGTTTPGTPASA) and 647–676 (GGATSSGAATGATTPGGAAAPGSTGNSSPG). Residues 677-696 (TPGGLGGPGAVGAGGPGVMG) show a composition bias toward gly residues. Residues 719–735 (APHDPAAAAAAADAAAP) are compositionally biased toward low complexity. The 67-residue stretch at 827–893 (ERFQKRFALG…KVVENATKDS (67 aa)) folds into the GRAM 2 domain. The UDP-alpha-D-glucose site is built by Ser1004, Arg1005, Asp1007, Asn1279, Asn1307, His1310, His1323, Ser1326, Gly1327, Thr1328, Asp1347, and Gln1348.

This sequence belongs to the glycosyltransferase 28 family.

It is found in the cytoplasm. Its subcellular location is the membrane. The enzyme catalyses a sterol + UDP-alpha-D-glucose = a sterol 3-beta-D-glucoside + UDP + H(+). It catalyses the reaction ergosterol + UDP-alpha-D-glucose = ergosteryl 3-beta-D-glucoside + UDP + H(+). In terms of biological role, sterol glycosyltransferase responsible for the glycosylation of ergosterol to form ergosterol-glucoside. The sequence is that of Sterol 3-beta-glucosyltransferase from Yarrowia lipolytica (strain CLIB 122 / E 150) (Yeast).